The primary structure comprises 298 residues: Bifunctional protein FolD (298 aa).

NADP(+) contacts are provided by residues 166-168, serine 195, and isoleucine 236; that span reads GRS.

This sequence belongs to the tetrahydrofolate dehydrogenase/cyclohydrolase family. In terms of assembly, homodimer.

It catalyses the reaction (6R)-5,10-methylene-5,6,7,8-tetrahydrofolate + NADP(+) = (6R)-5,10-methenyltetrahydrofolate + NADPH. The catalysed reaction is (6R)-5,10-methenyltetrahydrofolate + H2O = (6R)-10-formyltetrahydrofolate + H(+). It participates in one-carbon metabolism; tetrahydrofolate interconversion. Catalyzes the oxidation of 5,10-methylenetetrahydrofolate to 5,10-methenyltetrahydrofolate and then the hydrolysis of 5,10-methenyltetrahydrofolate to 10-formyltetrahydrofolate. This Chlorobium phaeobacteroides (strain BS1) protein is Bifunctional protein FolD.